The sequence spans 429 residues: Ribosomal RNA small subunit methyltransferase B (429 aa).

Residues 254–260 (CAAPGGK), Asp277, Asp303, and Asp322 each bind S-adenosyl-L-methionine. Cys375 (nucleophile) is an active-site residue.

Belongs to the class I-like SAM-binding methyltransferase superfamily. RsmB/NOP family.

The protein resides in the cytoplasm. It carries out the reaction cytidine(967) in 16S rRNA + S-adenosyl-L-methionine = 5-methylcytidine(967) in 16S rRNA + S-adenosyl-L-homocysteine + H(+). Its function is as follows. Specifically methylates the cytosine at position 967 (m5C967) of 16S rRNA. The sequence is that of Ribosomal RNA small subunit methyltransferase B from Escherichia coli O127:H6 (strain E2348/69 / EPEC).